The following is a 652-amino-acid chain: tRNA 5-methylaminomethyl-2-thiouridine biosynthesis bifunctional protein MnmC (652 aa).

Residues 1-235 are tRNA (mnm(5)s(2)U34)-methyltransferase; it reads MPDRLVPATL…EPALRVGEYA (235 aa). Residues 259–652 form an FAD-dependent cmnm(5)s(2)U34 oxidoreductase region; that stretch reads IGAGLAGCAV…IRALRGRQIG (394 aa).

In the N-terminal section; belongs to the methyltransferase superfamily. tRNA (mnm(5)s(2)U34)-methyltransferase family. This sequence in the C-terminal section; belongs to the DAO family. It depends on FAD as a cofactor.

The protein localises to the cytoplasm. The catalysed reaction is 5-aminomethyl-2-thiouridine(34) in tRNA + S-adenosyl-L-methionine = 5-methylaminomethyl-2-thiouridine(34) in tRNA + S-adenosyl-L-homocysteine + H(+). Catalyzes the last two steps in the biosynthesis of 5-methylaminomethyl-2-thiouridine (mnm(5)s(2)U) at the wobble position (U34) in tRNA. Catalyzes the FAD-dependent demodification of cmnm(5)s(2)U34 to nm(5)s(2)U34, followed by the transfer of a methyl group from S-adenosyl-L-methionine to nm(5)s(2)U34, to form mnm(5)s(2)U34. In Burkholderia ambifaria (strain ATCC BAA-244 / DSM 16087 / CCUG 44356 / LMG 19182 / AMMD) (Burkholderia cepacia (strain AMMD)), this protein is tRNA 5-methylaminomethyl-2-thiouridine biosynthesis bifunctional protein MnmC.